A 122-amino-acid chain; its full sequence is Large ribosomal subunit protein bL12 (122 aa).

The protein belongs to the bacterial ribosomal protein bL12 family. In terms of assembly, homodimer. Part of the ribosomal stalk of the 50S ribosomal subunit. Forms a multimeric L10(L12)X complex, where L10 forms an elongated spine to which 2 to 4 L12 dimers bind in a sequential fashion. Binds GTP-bound translation factors.

Forms part of the ribosomal stalk which helps the ribosome interact with GTP-bound translation factors. Is thus essential for accurate translation. This Stenotrophomonas maltophilia (strain K279a) protein is Large ribosomal subunit protein bL12.